Here is a 56-residue protein sequence, read N- to C-terminus: Light-harvesting protein B-880 beta chain (56 aa).

Residues 1-22 lie on the Cytoplasmic side of the membrane; that stretch reads AEIDRPVSLSGLTEGEAREFHG. Histidine 21 and histidine 39 together coordinate a bacteriochlorophyll. The chain crosses the membrane as a helical span at residues 23–45; sequence VFMTSFMVFIAVAIVAHILAWMW. Topologically, residues 46 to 56 are periplasmic; sequence RPWIPGPEGYA.

This sequence belongs to the antenna complex beta subunit family. As to quaternary structure, the core complex is formed by different alpha and beta chains, binding bacteriochlorophyll molecules, and arranged most probably in tetrameric structures disposed around the reaction center. The non-pigmented gamma chains may constitute additional components.

It localises to the cell inner membrane. Antenna complexes are light-harvesting systems, which transfer the excitation energy to the reaction centers. In Afifella marina (Rhodobium marinum), this protein is Light-harvesting protein B-880 beta chain.